We begin with the raw amino-acid sequence, 207 residues long: dTTP/UTP pyrophosphatase (207 aa).

D79 (proton acceptor) is an active-site residue.

The protein belongs to the Maf family. YhdE subfamily. It depends on a divalent metal cation as a cofactor.

The protein localises to the cytoplasm. It catalyses the reaction dTTP + H2O = dTMP + diphosphate + H(+). The enzyme catalyses UTP + H2O = UMP + diphosphate + H(+). Its function is as follows. Nucleoside triphosphate pyrophosphatase that hydrolyzes dTTP and UTP. May have a dual role in cell division arrest and in preventing the incorporation of modified nucleotides into cellular nucleic acids. This Rhodopseudomonas palustris (strain BisB18) protein is dTTP/UTP pyrophosphatase.